Here is a 336-residue protein sequence, read N- to C-terminus: Holliday junction branch migration complex subunit RuvB (336 aa).

The segment at 4-185 (MDERLLSGES…FGVLSRLEYY (182 aa)) is large ATPase domain (RuvB-L). Residues Leu24, Arg25, Gly66, Lys69, Thr70, Thr71, 132–134 (EDF), Arg175, Tyr185, and Arg222 contribute to the ATP site. Thr70 provides a ligand contact to Mg(2+). Residues 186-256 (TVDQLSAIVE…ITQMALELLQ (71 aa)) are small ATPAse domain (RuvB-S). The segment at 259–336 (KLGLDHIDHK…EHFGMEMPKV (78 aa)) is head domain (RuvB-H). Arg314 and Arg319 together coordinate DNA.

The protein belongs to the RuvB family. Homohexamer. Forms an RuvA(8)-RuvB(12)-Holliday junction (HJ) complex. HJ DNA is sandwiched between 2 RuvA tetramers; dsDNA enters through RuvA and exits via RuvB. An RuvB hexamer assembles on each DNA strand where it exits the tetramer. Each RuvB hexamer is contacted by two RuvA subunits (via domain III) on 2 adjacent RuvB subunits; this complex drives branch migration. In the full resolvosome a probable DNA-RuvA(4)-RuvB(12)-RuvC(2) complex forms which resolves the HJ.

It is found in the cytoplasm. The enzyme catalyses ATP + H2O = ADP + phosphate + H(+). The RuvA-RuvB-RuvC complex processes Holliday junction (HJ) DNA during genetic recombination and DNA repair, while the RuvA-RuvB complex plays an important role in the rescue of blocked DNA replication forks via replication fork reversal (RFR). RuvA specifically binds to HJ cruciform DNA, conferring on it an open structure. The RuvB hexamer acts as an ATP-dependent pump, pulling dsDNA into and through the RuvAB complex. RuvB forms 2 homohexamers on either side of HJ DNA bound by 1 or 2 RuvA tetramers; 4 subunits per hexamer contact DNA at a time. Coordinated motions by a converter formed by DNA-disengaged RuvB subunits stimulates ATP hydrolysis and nucleotide exchange. Immobilization of the converter enables RuvB to convert the ATP-contained energy into a lever motion, pulling 2 nucleotides of DNA out of the RuvA tetramer per ATP hydrolyzed, thus driving DNA branch migration. The RuvB motors rotate together with the DNA substrate, which together with the progressing nucleotide cycle form the mechanistic basis for DNA recombination by continuous HJ branch migration. Branch migration allows RuvC to scan DNA until it finds its consensus sequence, where it cleaves and resolves cruciform DNA. In Bacillus cereus (strain ZK / E33L), this protein is Holliday junction branch migration complex subunit RuvB.